The primary structure comprises 151 residues: Transcription antitermination protein NusB (151 aa).

The protein belongs to the NusB family.

In terms of biological role, involved in transcription antitermination. Required for transcription of ribosomal RNA (rRNA) genes. Binds specifically to the boxA antiterminator sequence of the ribosomal RNA (rrn) operons. The polypeptide is Transcription antitermination protein NusB (Thermodesulfovibrio yellowstonii (strain ATCC 51303 / DSM 11347 / YP87)).